The primary structure comprises 325 residues: Elongation factor P--(R)-beta-lysine ligase (325 aa).

76–78 contacts substrate; it reads SPE. ATP is bound by residues 100–102 and Asn-109; that span reads RNE. Substrate is bound at residue Tyr-118. 244–245 contacts ATP; the sequence is EL. Substrate is bound at residue Glu-251. Gly-300 is a binding site for ATP.

Belongs to the class-II aminoacyl-tRNA synthetase family. EpmA subfamily. In terms of assembly, homodimer.

The catalysed reaction is D-beta-lysine + L-lysyl-[protein] + ATP = N(6)-((3R)-3,6-diaminohexanoyl)-L-lysyl-[protein] + AMP + diphosphate + H(+). In terms of biological role, with EpmB is involved in the beta-lysylation step of the post-translational modification of translation elongation factor P (EF-P). Catalyzes the ATP-dependent activation of (R)-beta-lysine produced by EpmB, forming a lysyl-adenylate, from which the beta-lysyl moiety is then transferred to the epsilon-amino group of a conserved specific lysine residue in EF-P. This chain is Elongation factor P--(R)-beta-lysine ligase, found in Erwinia tasmaniensis (strain DSM 17950 / CFBP 7177 / CIP 109463 / NCPPB 4357 / Et1/99).